A 688-amino-acid chain; its full sequence is Probable transcription factor gsfR1 (688 aa).

Acidic residues predominate over residues 1-16 (MSDGPETAEGDTDDAV). Residues 1 to 95 (MSDGPETAEG…TPVSSRGSIA (95 aa)) form a disordered region. Over residues 24 to 36 (RVASESSARSQPR) the composition is skewed to polar residues. Residues 58-75 (EHSKEKNVSRRLPTEKTP) show a composition bias toward basic and acidic residues.

It is found in the nucleus. Functionally, probable transcription factor that regulates expression of the gene cluster that mediates the biosynthesis of Griseofulvin, an important antifungal drug that has been in use for a long time for treating dermatophyte infections. The polypeptide is Probable transcription factor gsfR1 (Penicillium aethiopicum).